We begin with the raw amino-acid sequence, 180 residues long: Virion protein US10 homolog (180 aa).

Belongs to the herpesviridae US10 family. Post-translationally, phosphorylated.

The protein localises to the virion tegument. The protein resides in the host nucleus matrix. The chain is Virion protein US10 homolog (64) from Varicella-zoster virus (strain Dumas) (HHV-3).